The chain runs to 425 residues: Histidine--tRNA ligase (425 aa).

This sequence belongs to the class-II aminoacyl-tRNA synthetase family. In terms of assembly, homodimer.

It is found in the cytoplasm. It carries out the reaction tRNA(His) + L-histidine + ATP = L-histidyl-tRNA(His) + AMP + diphosphate + H(+). In Listeria innocua serovar 6a (strain ATCC BAA-680 / CLIP 11262), this protein is Histidine--tRNA ligase.